Here is a 611-residue protein sequence, read N- to C-terminus: MRTAMAKSLGAAAFLGAALFAHTLAAQTATCSYNITNEWNTGYTGDITITNRGSSAINGWSVNWQYATNRLSSSWNANVSGSNPYSASNLSWNGNIQPGQSVSFGFQVNKNGGSAERPSVGGSICSGSVASSSAPASSVPSSIASSSPSSVASSVISSMASSSPVSSSSVASSTPGSSSGNQQCNWYGTLYPLCVTTTNGWGWEDQRSCIARSTCAAQPAPFGIVGSGSSTPVSSSSSSLSSSSVVSSIRSSSSSSSSSVATGNGLASLADFPIGVAVAASGGNADIFTSSARQNIVRAEFNQITAENIMKMSYMYSGSNFSFTNSDRLVSWAAQNGQTVHGHALVWHPSYQLPNWASDSNANFRQDFARHIDTVAAHFAGQVKSWDVVNEALFDSADDPDGRGSANGYRQSVFYRQFGGPEYIDEAFRRARAADPTAELYYNDFNTEENGAKTTALVNLVQRLLNNGVPIDGVGFQMHVMNDYPSIANIRQAMQKIVALSPTLKIKITELDVRLNNPYDGNSSNDYTNRNDCAVSCAGLDRQKARYKEIVQAYLEVVPPGRRGGITVWGIADPDSWLYTHQNLPDWPLLFNDNLQPKPAYQGVVEALSGR.

An N-terminal signal peptide occupies residues Met-1–Ala-26. The 102-residue stretch at Gln-27–Ser-128 folds into the CBM2 domain. Cystine bridges form between Cys-31-Cys-125, Cys-184-Cys-215, and Cys-194-Cys-209. A CBM10 domain is found at Gln-183–Arg-212. In terms of domain architecture, GH10 spans Ser-281–Ala-607. Glu-391 acts as the Proton donor in catalysis. The active-site Nucleophile is the Glu-510.

This sequence belongs to the glycosyl hydrolase 10 (cellulase F) family.

The catalysed reaction is Endohydrolysis of (1-&gt;4)-beta-D-xylosidic linkages in xylans.. Its pathway is glycan degradation; xylan degradation. This Cellvibrio japonicus (strain Ueda107) (Pseudomonas fluorescens subsp. cellulosa) protein is Endo-1,4-beta-xylanase A (xynA).